Consider the following 347-residue polypeptide: D-fructose 1,6-bisphosphatase class 2/sedoheptulose 1,7-bisphosphatase (347 aa).

Mn(2+) contacts are provided by D33, E57, D97, and E100. Residues 100–102, Y131, 176–178, and 198–200 contribute to the substrate site; these read EGT, RKR, and DGD. E225 is a binding site for Mn(2+).

This sequence belongs to the FBPase class 2 family. In terms of assembly, homotetramer. It depends on Mn(2+) as a cofactor.

The catalysed reaction is beta-D-fructose 1,6-bisphosphate + H2O = beta-D-fructose 6-phosphate + phosphate. It catalyses the reaction D-sedoheptulose 1,7-bisphosphate + H2O = D-sedoheptulose 7-phosphate + phosphate. Its pathway is carbohydrate biosynthesis; Calvin cycle. Functionally, catalyzes the hydrolysis of fructose 1,6-bisphosphate (Fru 1,6-P2) and sedoheptulose 1,7-bisphosphate (Sed 1,7-P2) to fructose 6-phosphate and sedoheptulose 7-phosphate, respectively. This Synechococcus sp. (strain JA-2-3B'a(2-13)) (Cyanobacteria bacterium Yellowstone B-Prime) protein is D-fructose 1,6-bisphosphatase class 2/sedoheptulose 1,7-bisphosphatase.